The primary structure comprises 208 residues: Probable GTP-binding protein EngB (208 aa).

Residues 23 to 205 form the EngB-type G domain; that stretch reads LTSEMVILGR…RQTLLKYLLT (183 aa). GTP contacts are provided by residues 31–38, 57–61, 84–87, 154–157, and 182–184; these read GRSNVGKS, GKTRL, DLPG, TKFD, and FNA. The Mg(2+) site is built by Ser38 and Thr59.

Belongs to the TRAFAC class TrmE-Era-EngA-EngB-Septin-like GTPase superfamily. EngB GTPase family. It depends on Mg(2+) as a cofactor.

Its function is as follows. Necessary for normal cell division and for the maintenance of normal septation. The protein is Probable GTP-binding protein EngB of Helicobacter pylori (strain J99 / ATCC 700824) (Campylobacter pylori J99).